A 133-amino-acid polypeptide reads, in one-letter code: ATP synthase epsilon chain (133 aa).

It belongs to the ATPase epsilon chain family. F-type ATPases have 2 components, CF(1) - the catalytic core - and CF(0) - the membrane proton channel. CF(1) has five subunits: alpha(3), beta(3), gamma(1), delta(1), epsilon(1). CF(0) has three main subunits: a, b and c.

Its subcellular location is the cell inner membrane. Produces ATP from ADP in the presence of a proton gradient across the membrane. The chain is ATP synthase epsilon chain from Maricaulis maris (strain MCS10) (Caulobacter maris).